Here is a 345-residue protein sequence, read N- to C-terminus: MKIAVDAMGGDNAPAVVVEGVERARDRFKDIEFDLFGDPQQVRPLIKDATRINLIETTEMIEMGEEPVRAIRKKKDSSIVRAAVAVKEGQADAFFSAGNTGAILAAGLFIVGRIKGIDRPGLTSILPIAKPGSGAKNFVYLDSGANAESKEKNLLQFAQLGRFYAENVLGVNNPRIALLNNGTEEDKGDRLHKEVHQQLKAQGDLNFVGNVEASALLAGEADVIVSDGWTANAALKATEGTAKMMLTLIKNGIENGGLRAKLGYLFLKPVFKKIAKLMGTSTYGGAVLLGLKAPVVKTHGSADALAVENTIAQIHTMIESKVIEKTVSYFGQVQSEENIDKPSKN.

This sequence belongs to the PlsX family. In terms of assembly, homodimer. Probably interacts with PlsY.

Its subcellular location is the cytoplasm. The catalysed reaction is a fatty acyl-[ACP] + phosphate = an acyl phosphate + holo-[ACP]. The protein operates within lipid metabolism; phospholipid metabolism. In terms of biological role, catalyzes the reversible formation of acyl-phosphate (acyl-PO(4)) from acyl-[acyl-carrier-protein] (acyl-ACP). This enzyme utilizes acyl-ACP as fatty acyl donor, but not acyl-CoA. This chain is Phosphate acyltransferase, found in Limosilactobacillus fermentum (strain NBRC 3956 / LMG 18251) (Lactobacillus fermentum).